A 273-amino-acid polypeptide reads, in one-letter code: Dermonecrotic toxin LruSicTox-alphaIC1a (273 aa).

Histidine 5 is an active-site residue. The Mg(2+) site is built by glutamate 25 and aspartate 27. The active-site Nucleophile is the histidine 41. 2 cysteine pairs are disulfide-bonded: cysteine 45/cysteine 51 and cysteine 47/cysteine 190. Aspartate 85 is a Mg(2+) binding site.

Belongs to the arthropod phospholipase D family. Class II subfamily. It depends on Mg(2+) as a cofactor. As to expression, expressed by the venom gland.

Its subcellular location is the secreted. It catalyses the reaction an N-(acyl)-sphingosylphosphocholine = an N-(acyl)-sphingosyl-1,3-cyclic phosphate + choline. It carries out the reaction an N-(acyl)-sphingosylphosphoethanolamine = an N-(acyl)-sphingosyl-1,3-cyclic phosphate + ethanolamine. The enzyme catalyses a 1-acyl-sn-glycero-3-phosphocholine = a 1-acyl-sn-glycero-2,3-cyclic phosphate + choline. The catalysed reaction is a 1-acyl-sn-glycero-3-phosphoethanolamine = a 1-acyl-sn-glycero-2,3-cyclic phosphate + ethanolamine. Dermonecrotic toxins cleave the phosphodiester linkage between the phosphate and headgroup of certain phospholipids (sphingolipid and lysolipid substrates), forming an alcohol (often choline) and a cyclic phosphate. This toxin acts on sphingomyelin (SM). It may also act on ceramide phosphoethanolamine (CPE), lysophosphatidylcholine (LPC) and lysophosphatidylethanolamine (LPE), but not on lysophosphatidylserine (LPS), and lysophosphatidylglycerol (LPG). It acts by transphosphatidylation, releasing exclusively cyclic phosphate products as second products. Induces dermonecrosis, hemolysis, increased vascular permeability, edema, inflammatory response, and platelet aggregation. The chain is Dermonecrotic toxin LruSicTox-alphaIC1a from Loxosceles rufescens (Mediterranean recluse spider).